A 399-amino-acid polypeptide reads, in one-letter code: 1-deoxy-D-xylulose 5-phosphate reductoisomerase (399 aa).

Thr-13, Gly-14, Ser-15, Ile-16, and Asn-127 together coordinate NADPH. Lys-128 is a 1-deoxy-D-xylulose 5-phosphate binding site. An NADPH-binding site is contributed by Glu-129. Asp-153 is a binding site for Mn(2+). Residues Ser-154, Glu-155, Ser-187, and His-210 each coordinate 1-deoxy-D-xylulose 5-phosphate. Mn(2+) is bound at residue Glu-155. Residue Gly-216 participates in NADPH binding. 1-deoxy-D-xylulose 5-phosphate is bound by residues Ser-223, Asn-228, Lys-229, and Glu-232. Residue Glu-232 participates in Mn(2+) binding.

The protein belongs to the DXR family. Requires Mg(2+) as cofactor. It depends on Mn(2+) as a cofactor.

It catalyses the reaction 2-C-methyl-D-erythritol 4-phosphate + NADP(+) = 1-deoxy-D-xylulose 5-phosphate + NADPH + H(+). The protein operates within isoprenoid biosynthesis; isopentenyl diphosphate biosynthesis via DXP pathway; isopentenyl diphosphate from 1-deoxy-D-xylulose 5-phosphate: step 1/6. Catalyzes the NADPH-dependent rearrangement and reduction of 1-deoxy-D-xylulose-5-phosphate (DXP) to 2-C-methyl-D-erythritol 4-phosphate (MEP). The polypeptide is 1-deoxy-D-xylulose 5-phosphate reductoisomerase (Bordetella parapertussis (strain 12822 / ATCC BAA-587 / NCTC 13253)).